A 109-amino-acid polypeptide reads, in one-letter code: MAMKNLLKDDDIKKALDQFKAADSFDHKKFFDVVGLKALSADNVKLVFKALDVDASGFIEEEELKFVLKGFSADGRDLTDKETKAFLAAADKDGDGKIGIDEFEALVHE.

Ala-2 carries the post-translational modification N-acetylalanine. 2 EF-hand domains span residues 39-74 (LSAD…FSAD) and 78-109 (LTDK…LVHE). Ca(2+)-binding residues include Asp-52, Asp-54, Ser-56, Phe-58, Glu-60, Glu-63, Asp-91, Asp-93, Asp-95, Lys-97, and Glu-102.

Belongs to the parvalbumin family.

In muscle, parvalbumin is thought to be involved in relaxation after contraction. It binds two calcium ions. The polypeptide is Parvalbumin-7 (pvalb7) (Danio rerio (Zebrafish)).